The following is a 175-amino-acid chain: Large ribosomal subunit protein uL10 (175 aa).

It belongs to the universal ribosomal protein uL10 family. In terms of assembly, part of the ribosomal stalk of the 50S ribosomal subunit. The N-terminus interacts with L11 and the large rRNA to form the base of the stalk. The C-terminus forms an elongated spine to which L12 dimers bind in a sequential fashion forming a multimeric L10(L12)X complex.

Forms part of the ribosomal stalk, playing a central role in the interaction of the ribosome with GTP-bound translation factors. The polypeptide is Large ribosomal subunit protein uL10 (Psychrobacter sp. (strain PRwf-1)).